A 347-amino-acid chain; its full sequence is Probable arabinogalactan endo-beta-1,4-galactanase A (347 aa).

The N-terminal stretch at 1 to 16 is a signal peptide; it reads MLFSYLLATLPLLANA. The active-site Proton donor is the E150. E260 acts as the Nucleophile in catalysis.

This sequence belongs to the glycosyl hydrolase 53 family.

The protein resides in the secreted. The enzyme catalyses The enzyme specifically hydrolyzes (1-&gt;4)-beta-D-galactosidic linkages in type I arabinogalactans.. In terms of biological role, endogalactanase involved in the degradation of plant cell wall polysaccharides, and more particularly of hairy regions of pectin. The sequence is that of Probable arabinogalactan endo-beta-1,4-galactanase A (galA) from Aspergillus oryzae (strain ATCC 42149 / RIB 40) (Yellow koji mold).